A 184-amino-acid chain; its full sequence is Chromobox protein homolog hpl-1 (184 aa).

Residues methionine 1 to asparagine 13 show a composition bias toward polar residues. 2 disordered regions span residues methionine 1–proline 27 and alanine 87–aspartate 115. A Chromo domain is found at phenylalanine 37 to arginine 95. Over residues proline 99–aspartate 115 the composition is skewed to polar residues.

Interacts with histone demethylase spr-5. Interacts with chromobox protein homolog hpl-2. Interacts with histone H3 tails methylated at 'Lys-9' (H3K9me3) and 'Lys-23'(H3K23me2). Interacts with histone H1 variant his-24 (when monomethylated at 'Lys-14'); the interaction is direct. May interact with the REST corepressor rcor-1, histone deacetylase hda-1, and the histone demethylase lsd-1.

The protein resides in the nucleus. In terms of biological role, seems to be involved in transcriptional silencing in heterochromatin-like complexes. Involved in epigenetic repression. Probably does not act as global transcriptional repressor. Plays a role in linking epigenetic regulation with the innate immune response. Acting in concert with chromobox protein homolog hpl-2 and histone H1 protein his-24, involved in reproduction, somatic gonad development, male tail development and vulval cell fate decisions; perhaps as a result of modulating expression of Hox genes mab-5 and egl-5. Role in growth and somatic gonad development is antagonized by histone-lysine N-methyltransferase set-2/SET1. Required for larval development, acting redundantly with hpl-2. Plays a role in the formation of the vulva and in fertility, acting together with a CoREST-like complex, and hpl-2. This chain is Chromobox protein homolog hpl-1, found in Caenorhabditis elegans.